We begin with the raw amino-acid sequence, 1166 residues long: Calcium-activated potassium channel subunit alpha-1 (1166 aa).

A compositionally biased stretch (gly residues) spans 1 to 15 (MANGGGGGGGGGGGS). Disordered regions lie at residues 1–20 (MANGGGGGGGGGGGSSLRMS) and 30–51 (LDASSSSSSSSSSSSSSSSVHE). Residues 1 to 74 (MANGGGGGGG…VPCDSRGQRM (74 aa)) lie on the Extracellular side of the membrane. Residues 33–48 (SSSSSSSSSSSSSSSS) are compositionally biased toward low complexity. A helical transmembrane segment spans residues 75-95 (WWAFLASSMVTFFGGLFIILL). Residues 96–166 (WRTLKYLWTV…MISAQTLTGR (71 aa)) lie on the Cytoplasmic side of the membrane. S-palmitoyl cysteine attachment occurs at residues cysteine 106, cysteine 107, and cysteine 109. A Phosphothreonine; by CamK2 modification is found at threonine 139. Residues 167–187 (VLVVLVFALSIGALVIYFIDS) form a helical membrane-spanning segment. At 188 to 202 (SNPIESCQNFYKDFT) the chain is on the extracellular side. A helical membrane pass occupies residues 203–223 (LQIDMAFNVFFLLYFGLRFIA). The Cytoplasmic segment spans residues 224-227 (ANDK). A helical transmembrane segment spans residues 228–248 (LWFWLEVNSVVDFFTVPPVFV). Over 249–252 (SVYL) the chain is Extracellular. A helical; Voltage-sensor transmembrane segment spans residues 253-273 (NRSWLGLRFLRALRLIQFSEI). Over 274–288 (LQFLNILKTSNSIKL) the chain is Cytoplasmic. A helical membrane pass occupies residues 289-309 (VNLLSIFISTWLTAAGFIHLV). The Extracellular portion of the chain corresponds to 310–323 (ENSGDPWENFQNNQ). An intramembrane region (pore-forming) is located at residues 324–346 (ALTYWECVYLLMVTMSTVGYGDV). The Selectivity for potassium signature appears at 340–343 (TVGY). Over 347-355 (YAKTTLGRL) the chain is Extracellular. Residues 356 to 376 (FMVFFILGGLAMFASYVPEII) form a helical membrane-spanning segment. Over 377 to 1166 (ELIGNRKKYG…KQKYVQEERL (790 aa)) the chain is Cytoplasmic. The RCK N-terminal 1 domain occupies 395 to 537 (RKHIVVCGHI…WNWKEGDDAI (143 aa)). Mg(2+) is bound by residues glutamate 427, glutamine 450, and glutamate 452. A segment S7 region spans residues 544 to 564 (LGFIAQSCLAQGLSTMLANLF). A segment S8 region spans residues 601 to 621 (LSFPTVCELCFVKLKLLMIAI). Residues 665-669 (CKACH) form a heme-binding motif region. A disordered region spans residues 689 to 717 (EQPSTLSPKKKQRNGGMRNSPSSSPKLMR). Threonine 693 bears the Phosphothreonine mark. A phosphoserine mark is found at serine 695, serine 708, and serine 712. A segment S9 region spans residues 767–787 (VLSGHVVVCIFGDVSSALIGL). The region spanning 769–913 (SGHVVVCIFG…MDRSSPDNSP (145 aa)) is the RCK N-terminal 2 domain. Threonine 900 is subject to Phosphothreonine. Phosphoserine is present on residues serine 908 and serine 912. A Calcium bowl motif is present at residues 933 to 955 (TELVNDTNVQFLDQDDDDDPDTE). The Ca(2+) site is built by glutamine 942, aspartate 945, aspartate 948, and aspartate 950. The segment at 962 to 982 (FACGTAFAVSVLDSLMSATYF) is segment S10. The span at 1116 to 1141 (RASLSHSSHSSQSSSKKSSSVHSIPS) shows a compositional bias: low complexity. Residues 1116-1166 (RASLSHSSHSSQSSSKKSSSVHSIPSTANRQNRPKSRESRDKQKYVQEERL) form a disordered region. Positions 1150–1166 (KSRESRDKQKYVQEERL) are enriched in basic and acidic residues. Phosphoserine; by PKG is present on residues serine 1151 and serine 1154.

Belongs to the potassium channel family. Calcium-activated (TC 1.A.1.3) subfamily. KCa1.1/KCNMA1 sub-subfamily. As to quaternary structure, homotetramer; which constitutes the calcium-activated potassium channel. Interacts with beta subunits KCNMB1, KCNMB2, KCNMB3 and KCNMB4. Interacts with gamma subunits LRRC26, LRRC38, LRRC52 and LRRC55. Beta and gamma subunits are accessory, and modulate its activity. Interacts with RAB11B. In terms of processing, phosphorylated. Stimulated by PKG, but not by PKA. In smooth muscles, phosphorylation affects its activity. Post-translationally, phosphorylated. Exclusively stimulated by PKA. In smooth muscles, phosphorylation affects its activity. Incremental phosphorylation of Thr-139 of the KCNMA1 tetramer changes the response to ethanol from increased activation to inhibition of channel activity. In terms of processing, palmitoylation by ZDHHC22 and ZDHHC23 within the intracellular linker between the S0 and S1 transmembrane domains regulates localization to the plasma membrane. Depalmitoylated by LYPLA1 and LYPLAL1, leading to retard exit from the trans-Golgi network.

It localises to the cell membrane. It catalyses the reaction K(+)(in) = K(+)(out). With respect to regulation, ethanol and carbon monoxide-bound heme increase channel activation. Heme inhibits channel activation. Phosphorylation of Thr-139 leads to inhibition of channel activity by ethanol. In terms of biological role, potassium channel activated by both membrane depolarization or increase in cytosolic Ca(2+) that mediates export of K(+). It is also activated by concentration of cytosolic Mg(2+). Its activation dampens the excitatory events that elevate the cytosolic Ca(2+) concentration and/or depolarize the cell membrane. It therefore contributes to repolarization of the membrane potential. Plays a key role in controlling excitability in a number of systems, such as regulation of the contraction of smooth muscle, the tuning of hair cells in the cochlea, regulation of transmitter release, and innate immunity. In smooth muscles, its activation by high level of Ca(2+), caused by ryanodine receptors in the sarcoplasmic reticulum, regulates the membrane potential. In cochlea cells, its number and kinetic properties partly determine the characteristic frequency of each hair cell and thereby helps to establish a tonotopic map. Kinetics of KCNMA1 channels are determined by alternative splicing, phosphorylation status and its combination with modulating beta subunits. Highly sensitive to both iberiotoxin (IbTx) and charybdotoxin (CTX). The polypeptide is Calcium-activated potassium channel subunit alpha-1 (KCNMA1) (Bos taurus (Bovine)).